The primary structure comprises 399 residues: Elongation factor Tu (399 aa).

One can recognise a tr-type G domain in the interval 10 to 209 (KPHVNIGTIG…EVDAYIPTPV (200 aa)). Residues 19-26 (GHVDHGKT) are G1. 19–26 (GHVDHGKT) serves as a coordination point for GTP. A Mg(2+)-binding site is contributed by Thr-26. A G2 region spans residues 60 to 64 (GITIA). A G3 region spans residues 81–84 (DCPG). GTP is bound by residues 81–85 (DCPGH) and 136–139 (NKQD). The segment at 136–139 (NKQD) is G4. The segment at 174-176 (SAL) is G5.

This sequence belongs to the TRAFAC class translation factor GTPase superfamily. Classic translation factor GTPase family. EF-Tu/EF-1A subfamily. Monomer.

The protein resides in the cytoplasm. The catalysed reaction is GTP + H2O = GDP + phosphate + H(+). Functionally, GTP hydrolase that promotes the GTP-dependent binding of aminoacyl-tRNA to the A-site of ribosomes during protein biosynthesis. The protein is Elongation factor Tu of Helicobacter acinonychis (strain Sheeba).